A 405-amino-acid chain; its full sequence is Multifunctional CCA protein (405 aa).

ATP is bound by residues Gly8 and Arg11. CTP-binding residues include Gly8 and Arg11. Residues Asp21 and Asp23 each coordinate Mg(2+). Residues Arg91, Arg137, and Arg140 each contribute to the ATP site. CTP is bound by residues Arg91, Arg137, and Arg140. One can recognise an HD domain in the interval 225-326 (TGVHAMLVLD…LRLLRECDAL (102 aa)).

This sequence belongs to the tRNA nucleotidyltransferase/poly(A) polymerase family. Bacterial CCA-adding enzyme type 1 subfamily. In terms of assembly, monomer. Can also form homodimers and oligomers. Mg(2+) is required as a cofactor. The cofactor is Ni(2+).

The enzyme catalyses a tRNA precursor + 2 CTP + ATP = a tRNA with a 3' CCA end + 3 diphosphate. It carries out the reaction a tRNA with a 3' CCA end + 2 CTP + ATP = a tRNA with a 3' CCACCA end + 3 diphosphate. Functionally, catalyzes the addition and repair of the essential 3'-terminal CCA sequence in tRNAs without using a nucleic acid template. Adds these three nucleotides in the order of C, C, and A to the tRNA nucleotide-73, using CTP and ATP as substrates and producing inorganic pyrophosphate. tRNA 3'-terminal CCA addition is required both for tRNA processing and repair. Also involved in tRNA surveillance by mediating tandem CCA addition to generate a CCACCA at the 3' terminus of unstable tRNAs. While stable tRNAs receive only 3'-terminal CCA, unstable tRNAs are marked with CCACCA and rapidly degraded. The polypeptide is Multifunctional CCA protein (Laribacter hongkongensis (strain HLHK9)).